We begin with the raw amino-acid sequence, 133 residues long: Putative esterase STK_17900 (133 aa).

This sequence belongs to the thioesterase PaaI family.

This Sulfurisphaera tokodaii (strain DSM 16993 / JCM 10545 / NBRC 100140 / 7) (Sulfolobus tokodaii) protein is Putative esterase STK_17900.